The primary structure comprises 284 residues: Bifunctional protein FolD (284 aa).

NADP(+)-binding positions include 166-168 (GAS) and Ile232.

Belongs to the tetrahydrofolate dehydrogenase/cyclohydrolase family. In terms of assembly, homodimer.

It carries out the reaction (6R)-5,10-methylene-5,6,7,8-tetrahydrofolate + NADP(+) = (6R)-5,10-methenyltetrahydrofolate + NADPH. It catalyses the reaction (6R)-5,10-methenyltetrahydrofolate + H2O = (6R)-10-formyltetrahydrofolate + H(+). Its pathway is one-carbon metabolism; tetrahydrofolate interconversion. Functionally, catalyzes the oxidation of 5,10-methylenetetrahydrofolate to 5,10-methenyltetrahydrofolate and then the hydrolysis of 5,10-methenyltetrahydrofolate to 10-formyltetrahydrofolate. This is Bifunctional protein FolD from Stutzerimonas stutzeri (strain A1501) (Pseudomonas stutzeri).